The following is a 76-amino-acid chain: MSYQQQQCKQPCQPPPVCPPKKCPEPCPPPQCPEPCPPPKCPEPCPESCPPPSYQQKCPPVQPPPPCQQKCPPKSK.

A run of 3 repeats spans residues 21 to 29, 30 to 38, and 39 to 47. A 3 X 9 AA approximate tandem repeats region spans residues 21-47; the sequence is KKCPEPCPPPQCPEPCPPPKCPEPCPE. Pro residues predominate over residues 40–53; the sequence is KCPEPCPESCPPPS. The disordered stretch occupies residues 40–76; it reads KCPEPCPESCPPPSYQQKCPPVQPPPPCQQKCPPKSK.

The protein belongs to the cornifin (SPRR) family. In terms of tissue distribution, not expressed in uterus.

It is found in the cytoplasm. In terms of biological role, cross-linked envelope protein of keratinocytes. It is a keratinocyte protein that first appears in the cell cytosol, but ultimately becomes cross-linked to membrane proteins by transglutaminase. All that results in the formation of an insoluble envelope beneath the plasma membrane. The protein is Small proline-rich protein 2I (Sprr2i) of Mus musculus (Mouse).